The chain runs to 538 residues: Cytochrome P450 monooxygenase flvC (538 aa).

The chain crosses the membrane as a helical span at residues 17–37; that stretch reads TVLIAGLLVYWVGSAIFLAVL. Heme is bound at residue cysteine 478.

Belongs to the cytochrome P450 family. It depends on heme as a cofactor.

It localises to the membrane. The enzyme catalyses pre-flavunoidine + reduced [NADPH--hemoprotein reductase] + O2 = 10-hydroxy-pre-flavunoidine + oxidized [NADPH--hemoprotein reductase] + H2O + H(+). The protein operates within secondary metabolite biosynthesis; terpenoid biosynthesis. Cytochrome P450 monooxygenase; part of the gene cluster that mediates the biosynthesis of flavunoidine, an alkaloidal terpenoid with a tetracyclic cage-like core connected to dimethylcadaverine via a C-N bond and acylated with 5,5-dimethyl-L-pipecolate. The tetracyclic core is synthesized by the terpene cyclase flvE and the cytochrome P450 monooxygenase flvD. The terpene cyclase flvE catalyzes the cyclization of farnesyl pyrophosphate (FPP) to form (1R,4R,5S)-(+)-acoradiene and the cytochrome P450 monooxygenase flvD is then responsible for oxidative conversion of (1R,4R,5S)-(+)-acoradiene into the tetracyclic cage present in the final product flavunoidine. In parallel, the N-methyltransferase flvH dimethylates L-lysine to give N,N-dimethyl-L-Lysin which is decarboxylated by flvG to afford dimethylcadaverine. The terpene cyclase-like protein flvF is the enzyme that attaches the dimethylcadaverine precusor at the C-7 of the tetracyclic cage to yield pre-flavunoidine. The cytochrome monooxygenase flvC hydroxylates the C-10 position of pre-flavunoidine whereas the NRPS flvI acylates the terpenoid core at the hydroxylated C-10 with dimethylpipecolate to yield final flavunoidine. The bifunctional enzyme flvA and the dehydrogenase flvB are responsible for the synthesis of the dimethylpipecolate precursor. The PLP-dependent lyase domain of flvA might use L-O-acetyl-homoserine and alpha-keto-isovalerate to form an intermediary ketone that can cyclize intramolecularly to yield an imine. The imine can be reduced by flvB to yield the 6-carboxylated pipecolate. The C-terminal alpha-KG-dependent oxygenase domain of flvA is then proposed to catalyze the decarboxylation to yield dimethylpipecolate. In Aspergillus flavus (strain ATCC 200026 / FGSC A1120 / IAM 13836 / NRRL 3357 / JCM 12722 / SRRC 167), this protein is Cytochrome P450 monooxygenase flvC.